Reading from the N-terminus, the 207-residue chain is ATP synthase subunit b 2 (207 aa).

A helical membrane pass occupies residues 53–72 (TYASQLLWLVITFSVFYLLM).

This sequence belongs to the ATPase B chain family. As to quaternary structure, F-type ATPases have 2 components, F(1) - the catalytic core - and F(0) - the membrane proton channel. F(1) has five subunits: alpha(3), beta(3), gamma(1), delta(1), epsilon(1). F(0) has three main subunits: a(1), b(2) and c(10-14). The alpha and beta chains form an alternating ring which encloses part of the gamma chain. F(1) is attached to F(0) by a central stalk formed by the gamma and epsilon chains, while a peripheral stalk is formed by the delta and b chains.

It is found in the cell inner membrane. In terms of biological role, f(1)F(0) ATP synthase produces ATP from ADP in the presence of a proton or sodium gradient. F-type ATPases consist of two structural domains, F(1) containing the extramembraneous catalytic core and F(0) containing the membrane proton channel, linked together by a central stalk and a peripheral stalk. During catalysis, ATP synthesis in the catalytic domain of F(1) is coupled via a rotary mechanism of the central stalk subunits to proton translocation. Its function is as follows. Component of the F(0) channel, it forms part of the peripheral stalk, linking F(1) to F(0). The b'-subunit is a diverged and duplicated form of b found in plants and photosynthetic bacteria. The chain is ATP synthase subunit b 2 (atpF2) from Rhizobium etli (strain CIAT 652).